The sequence spans 68 residues: uncharacterized protein (68 aa).

Positions 1–27 are disordered; sequence MNEFEKWIEGRYEPHEQKQKEHEDTMG.

This is an uncharacterized protein from Bacillus subtilis (strain 168).